The chain runs to 743 residues: Inhibitor of nuclear factor kappa-B kinase subunit alpha (743 aa).

A Protein kinase domain is found at 15-300; that stretch reads WDMKDRLGTG…MDCGRPQCFV (286 aa). ATP contacts are provided by residues 21-29 and lysine 44; that span reads LGTGGFGNV. Aspartate 144 (proton acceptor) is an active-site residue. The interval 453 to 474 is leucine-zipper; the sequence is LLRFNTNLTKMKNTMVSASQQL. Residues 736–741 form an NEMO-binding region; the sequence is LDFSWL.

The protein belongs to the protein kinase superfamily. Ser/Thr protein kinase family. I-kappa-B kinase subfamily.

It is found in the cytoplasm. Its subcellular location is the nucleus. It carries out the reaction L-seryl-[I-kappa-B protein] + ATP = O-phospho-L-seryl-[I-kappa-B protein] + ADP + H(+). Activated when phosphorylated and inactivated when dephosphorylated. Functionally, phosphorylates inhibitors of NF-kappa-B thus leading to the dissociation of the inhibitor/NF-kappa-B complex and ultimately the degradation of the inhibitor. Phosphorylates 'Ser-10' of histone H3 at NF-kappa-B-regulated promoters during inflammatory responses triggered by cytokines. The polypeptide is Inhibitor of nuclear factor kappa-B kinase subunit alpha (chuk) (Xenopus tropicalis (Western clawed frog)).